A 450-amino-acid polypeptide reads, in one-letter code: Glucose-6-phosphate isomerase (450 aa).

A Phosphothreonine modification is found at T39. E291 acts as the Proton donor in catalysis. Catalysis depends on residues H312 and K426.

This sequence belongs to the GPI family.

It localises to the cytoplasm. It catalyses the reaction alpha-D-glucose 6-phosphate = beta-D-fructose 6-phosphate. It participates in carbohydrate biosynthesis; gluconeogenesis. The protein operates within carbohydrate degradation; glycolysis; D-glyceraldehyde 3-phosphate and glycerone phosphate from D-glucose: step 2/4. Functionally, catalyzes the reversible isomerization of glucose-6-phosphate to fructose-6-phosphate. The chain is Glucose-6-phosphate isomerase from Bacillus thuringiensis (strain Al Hakam).